The following is a 164-amino-acid chain: UPF0114 protein YqhA (164 aa).

Transmembrane regions (helical) follow at residues 15 to 35, 53 to 73, and 136 to 156; these read LLAPVYFGLSLALVALALKFF, LILVLLSLVDMTLVGGLLVMV, and LMWYVIIHLTFVLSAFVMGYL.

It belongs to the UPF0114 family.

The protein resides in the cell membrane. This Shigella dysenteriae serotype 1 (strain Sd197) protein is UPF0114 protein YqhA.